A 199-amino-acid polypeptide reads, in one-letter code: Recombination protein RecR (199 aa).

The segment at 57-72 adopts a C4-type zinc-finger fold; it reads CEICGNMDTENICRIC. Residues 80 to 175 form the Toprim domain; sequence SVIAIVETVA…KISRLASGIP (96 aa).

It belongs to the RecR family.

Its function is as follows. May play a role in DNA repair. It seems to be involved in an RecBC-independent recombinational process of DNA repair. It may act with RecF and RecO. In Rickettsia canadensis (strain McKiel), this protein is Recombination protein RecR.